A 339-amino-acid chain; its full sequence is Sulfate/thiosulfate import ATP-binding protein CysA (339 aa).

One can recognise an ABC transporter domain in the interval 3 to 237 (IAIRSVEKQF…PETAFVCGFV (235 aa)). 35 to 42 (GPSGSGKT) is a binding site for ATP.

The protein belongs to the ABC transporter superfamily. Sulfate/tungstate importer (TC 3.A.1.6) family. As to quaternary structure, the complex is composed of two ATP-binding proteins (CysA), two transmembrane proteins (CysT and CysW) and a solute-binding protein (CysP).

The protein resides in the cell inner membrane. It carries out the reaction sulfate(out) + ATP + H2O = sulfate(in) + ADP + phosphate + H(+). It catalyses the reaction thiosulfate(out) + ATP + H2O = thiosulfate(in) + ADP + phosphate + H(+). Functionally, part of the ABC transporter complex CysAWTP involved in sulfate/thiosulfate import. Responsible for energy coupling to the transport system. The sequence is that of Sulfate/thiosulfate import ATP-binding protein CysA from Caulobacter vibrioides (strain ATCC 19089 / CIP 103742 / CB 15) (Caulobacter crescentus).